The sequence spans 190 residues: Threonylcarbamoyl-AMP synthase (190 aa).

Residues 7–190 (IGSIAAAVDL…ALTGELFRQG (184 aa)) enclose the YrdC-like domain.

Belongs to the SUA5 family. TsaC subfamily.

It localises to the cytoplasm. The enzyme catalyses L-threonine + hydrogencarbonate + ATP = L-threonylcarbamoyladenylate + diphosphate + H2O. Required for the formation of a threonylcarbamoyl group on adenosine at position 37 (t(6)A37) in tRNAs that read codons beginning with adenine. Catalyzes the conversion of L-threonine, HCO(3)(-)/CO(2) and ATP to give threonylcarbamoyl-AMP (TC-AMP) as the acyladenylate intermediate, with the release of diphosphate. This Salmonella typhimurium (strain LT2 / SGSC1412 / ATCC 700720) protein is Threonylcarbamoyl-AMP synthase.